Consider the following 333-residue polypeptide: Tetraacyldisaccharide 4'-kinase (333 aa).

55-62 (TIGGNGKT) lines the ATP pocket.

It belongs to the LpxK family.

The enzyme catalyses a lipid A disaccharide + ATP = a lipid IVA + ADP + H(+). Its pathway is glycolipid biosynthesis; lipid IV(A) biosynthesis; lipid IV(A) from (3R)-3-hydroxytetradecanoyl-[acyl-carrier-protein] and UDP-N-acetyl-alpha-D-glucosamine: step 6/6. Transfers the gamma-phosphate of ATP to the 4'-position of a tetraacyldisaccharide 1-phosphate intermediate (termed DS-1-P) to form tetraacyldisaccharide 1,4'-bis-phosphate (lipid IVA). The polypeptide is Tetraacyldisaccharide 4'-kinase (Blochmanniella floridana).